The primary structure comprises 397 residues: Serpin B10 (397 aa).

Positions 74–77 (KKRK) match the Nuclear localization signal motif.

This sequence belongs to the serpin family. Ov-serpin subfamily.

It is found in the nucleus. The protein localises to the cytoplasm. Protease inhibitor that may play a role in the regulation of protease activities during hematopoiesis and apoptosis induced by TNF. May regulate protease activities in the cytoplasm and in the nucleus. The chain is Serpin B10 (SERPINB10) from Bos taurus (Bovine).